A 492-amino-acid chain; its full sequence is MTLWINGDWVTGQGALRVKRNPVSGEVLWQGNDADAAQVGQACRAARAAFPRWARLSFGDRQVRVERFAGLLESNKAELTAIIARETGKPRWEAATEVTAMINKIAISIKAYHVRTGEQRSEMPDGAASLRHRPHGVLAVFGPYNFPGHLPNGHIVPALLAGNTIIFKPSELTPWSGEAVMRLWQQAGLPPGVLNLVQGGRETGQALSALEDLDGLLFTGSANTGYQLHRQLSGQPEKILALEMGGNNPLIIDEAADIDAAVHLTIQSAFVTAGQRCTCARRLLLKSGAQGDAFLARLVAVSQRLTPGRWDDEPQPFIGGLISEQAAQQVVTAWQQLETMGGRTLLAPRLLQAGTSLLTPGIIEMTGVTGVPDEEVFGPLLRVWRYDNFDEAIRMANNTRFGLSCGLVSPEREKFDQLLLEARAGIVNWNKPLTGAASTAPFGGIGASGNHRPSGWYAADYCAWPMASLESDSLTLPATLNPGLDFSDEVVR.

220–225 contacts NAD(+); that stretch reads GSANTG. Active-site residues include E243 and C277.

It belongs to the aldehyde dehydrogenase family. AstD subfamily.

It carries out the reaction N-succinyl-L-glutamate 5-semialdehyde + NAD(+) + H2O = N-succinyl-L-glutamate + NADH + 2 H(+). The protein operates within amino-acid degradation; L-arginine degradation via AST pathway; L-glutamate and succinate from L-arginine: step 4/5. Its function is as follows. Catalyzes the NAD-dependent reduction of succinylglutamate semialdehyde into succinylglutamate. This is N-succinylglutamate 5-semialdehyde dehydrogenase from Escherichia coli O7:K1 (strain IAI39 / ExPEC).